A 178-amino-acid polypeptide reads, in one-letter code: Peptidyl-prolyl cis-trans isomerase H (178 aa).

Residues Phe14–Gln177 enclose the PPIase cyclophilin-type domain.

Belongs to the cyclophilin-type PPIase family. PPIase H subfamily.

The protein resides in the nucleus. The catalysed reaction is [protein]-peptidylproline (omega=180) = [protein]-peptidylproline (omega=0). Functionally, PPIases accelerate the folding of proteins. It catalyzes the cis-trans isomerization of proline imidic peptide bonds in oligopeptides. The chain is Peptidyl-prolyl cis-trans isomerase H (cyp7) from Rhizopus delemar (strain RA 99-880 / ATCC MYA-4621 / FGSC 9543 / NRRL 43880) (Mucormycosis agent).